The sequence spans 266 residues: Thymidylate synthase (266 aa).

Residue Arg24 coordinates dUMP. His54 contributes to the (6R)-5,10-methylene-5,6,7,8-tetrahydrofolate binding site. 129-130 lines the dUMP pocket; that stretch reads RR. Cys149 serves as the catalytic Nucleophile. Residues 169 to 172, Asn180, and 210 to 212 contribute to the dUMP site; these read RSAD and HIY. Asp172 lines the (6R)-5,10-methylene-5,6,7,8-tetrahydrofolate pocket. A (6R)-5,10-methylene-5,6,7,8-tetrahydrofolate-binding site is contributed by Ala265.

This sequence belongs to the thymidylate synthase family. Bacterial-type ThyA subfamily. In terms of assembly, homodimer.

It localises to the cytoplasm. The catalysed reaction is dUMP + (6R)-5,10-methylene-5,6,7,8-tetrahydrofolate = 7,8-dihydrofolate + dTMP. It functions in the pathway pyrimidine metabolism; dTTP biosynthesis. Functionally, catalyzes the reductive methylation of 2'-deoxyuridine-5'-monophosphate (dUMP) to 2'-deoxythymidine-5'-monophosphate (dTMP) while utilizing 5,10-methylenetetrahydrofolate (mTHF) as the methyl donor and reductant in the reaction, yielding dihydrofolate (DHF) as a by-product. This enzymatic reaction provides an intracellular de novo source of dTMP, an essential precursor for DNA biosynthesis. The sequence is that of Thymidylate synthase from Mycolicibacterium paratuberculosis (strain ATCC BAA-968 / K-10) (Mycobacterium paratuberculosis).